The chain runs to 366 residues: Nucleoporin SEH1 (366 aa).

WD repeat units lie at residues 18 to 57 (AHRD…NWRR), 63 to 104 (CHGG…TEKD), 111 to 152 (QWIR…RIYE), 161 to 209 (RWNL…VIYE), 226 to 267 (DMPC…TAIL), and 290 to 329 (GDQR…QWVK).

The protein belongs to the WD repeat SEC13 family. As to quaternary structure, component of the nuclear pore complex (NPC). Probably part of the GATOR complex.

The protein resides in the nucleus. It localises to the nuclear pore complex. It is found in the lysosome membrane. Probable component of the nuclear pore complex (NPC) which is involved in the trafficking of macromolecules between the cytoplasm and nucleus. Its function is as follows. As a component of the GATOR complex may function in the amino acid-sensing branch of the TORC1 signaling pathway. This is Nucleoporin SEH1 from Caenorhabditis briggsae.